We begin with the raw amino-acid sequence, 944 residues long: Translation initiation factor IF-2 (944 aa).

Residues 55–81 (LTGQAAAPAAAPSSAPRPGARSSAPKP) are compositionally biased toward low complexity. A disordered region spans residues 55-329 (LTGQAAAPAA…RTKRAEFELR (275 aa)). The span at 82-92 (GGRPTPGPQPT) shows a compositional bias: pro residues. The segment covering 93 to 107 (AAPEVEAPEASDVPV) has biased composition (low complexity). Over residues 123–135 (ASRKAAAEEKAQA) the composition is skewed to basic and acidic residues. Composition is skewed to low complexity over residues 136-153 (EKSA…ETPS) and 211-222 (GQRPAAGAAGPR). The span at 223–236 (PAAPRPGSPRPGAP) shows a compositional bias: pro residues. Low complexity predominate over residues 244 to 257 (GARPAGFGQRPAGA). The segment covering 258-269 (GRPGGAPGGAGR) has biased composition (gly residues). Residues 270–283 (PGAPAAGGFQRPAG) show a composition bias toward low complexity. The span at 284–310 (GFAGRPGGGGRGRGPGGGTAGAFGRGG) shows a compositional bias: gly residues. Over residues 311 to 322 (GKSKSRKSKRTK) the composition is skewed to basic residues. The 175-residue stretch at 437-611 (IRPPVVTVMG…LTADAGLDLR (175 aa)) folds into the tr-type G domain. The interval 446–453 (GHVDHGKT) is G1. 446 to 453 (GHVDHGKT) lines the GTP pocket. A G2 region spans residues 471 to 475 (GITQH). The interval 496–499 (DTPG) is G3. GTP contacts are provided by residues 496–500 (DTPGH) and 550–553 (NKVD). Residues 550–553 (NKVD) form a G4 region. The segment at 586–588 (SAL) is G5.

This sequence belongs to the TRAFAC class translation factor GTPase superfamily. Classic translation factor GTPase family. IF-2 subfamily.

The protein resides in the cytoplasm. One of the essential components for the initiation of protein synthesis. Protects formylmethionyl-tRNA from spontaneous hydrolysis and promotes its binding to the 30S ribosomal subunits. Also involved in the hydrolysis of GTP during the formation of the 70S ribosomal complex. The protein is Translation initiation factor IF-2 of Clavibacter michiganensis subsp. michiganensis (strain NCPPB 382).